Reading from the N-terminus, the 241-residue chain is Octanoyltransferase (241 aa).

Residues 38–227 (AGGPDTLLLL…AVCNALDGAL (190 aa)) form the BPL/LPL catalytic domain. Substrate is bound by residues 85 to 92 (RGGKITWH), 157 to 159 (AIG), and 170 to 172 (GFA). C188 acts as the Acyl-thioester intermediate in catalysis.

This sequence belongs to the LipB family.

It is found in the cytoplasm. The enzyme catalyses octanoyl-[ACP] + L-lysyl-[protein] = N(6)-octanoyl-L-lysyl-[protein] + holo-[ACP] + H(+). It functions in the pathway protein modification; protein lipoylation via endogenous pathway; protein N(6)-(lipoyl)lysine from octanoyl-[acyl-carrier-protein]: step 1/2. In terms of biological role, catalyzes the transfer of endogenously produced octanoic acid from octanoyl-acyl-carrier-protein onto the lipoyl domains of lipoate-dependent enzymes. Lipoyl-ACP can also act as a substrate although octanoyl-ACP is likely to be the physiological substrate. The sequence is that of Octanoyltransferase from Mycobacterium ulcerans (strain Agy99).